Reading from the N-terminus, the 205-residue chain is High frequency lysogenization protein HflD homolog (205 aa).

Belongs to the HflD family.

The protein localises to the cytoplasm. Its subcellular location is the cell inner membrane. The polypeptide is High frequency lysogenization protein HflD homolog (Haemophilus influenzae (strain 86-028NP)).